Here is a 733-residue protein sequence, read N- to C-terminus: MSLILDDIILSLTNANERTPPQALKTTLSLLYEKSKQYGLSSPQLQALVRLLCETSIIDTVTKVYIVENCFLPDGYLTKELLLEIINHLGTPTVFSRYRIQTPPVLQSALCKWLVHVYFLFPVHSEREHNISSSIWLHLWQFSFLQKWITPLVIWQATTPVDVKPWKLSIIKRCAMHPGYRDAPGSATLILQRFQCLVGASSQITESIITINCNRKTLKSHRNLKLDAHFLSILKRILSRAHPANFPADTVQNTIDMYLSEIHQLGADSIYPLRLQSLPEYVPSDSTVSLWDVTSLEQLAQNWPQLHIPNDVDYMMKPSLNSNVLLPRKVMSRDSLKHLYSSIILIKNSRDESSSPYEWCIWQLKRCFAHQIETPQEVIPIIISVSSMDNKLSSRIIQTFCNLKYLKLDELTLKKVCGGILPLWKPELISGTREFFVKFMASIFMWSTRDGHDNNCTFSETCFYVLQMITNWVLDDKLIALGLTLLHDMQSLLTLDKIFNNATSNRFSTMAFISSLDILTQLSKQTKSDYAIQYLIVGPDIMNKVFSSDDPLLLSAACRYLVATKNKLMQYPSTNKFVRMQNQYIMDLTNYLYRNKVLSSKSLFGVSPDFFKQILENLYIPTADFKNAKFFTITGIPALSYICIIILRRLETAENTKIKFTSGIINEETFNNFFRVHHDEIGQHGWIKGVNNIHDLRVKILMHLSNTANPYRDIAAFLFTYLKSLSKYSVQNS.

The residue at position 2 (Ser-2) is an N-acetylserine.

Belongs to the CENP-I/CTF3 family. As to quaternary structure, component of the heterotrimeric kinetochore subcomplex CTF3, which consists of CTF3, MCM16 and MCM22. The CTF3 subcomplex is part of a larger constitutive centromere-associated network (CCAN) (also known as central kinetochore CTF19 complex in yeast), which is composed of at least AME1, CHL4, CNN1, CTF3, CTF19, IML3, MCM16, MCM21, MCM22, MHF1, MHF2, MIF2, NKP1, NKP2, OKP1 and WIP1. Interacts with CTF19. Interacts with CHL4.

The protein resides in the nucleus. It is found in the chromosome. The protein localises to the centromere. Its subcellular location is the kinetochore. In terms of biological role, component of the central kinetochore, which mediates the attachment of the centromere to the mitotic spindle by forming essential interactions between the microtubule-associated outer kinetochore proteins and the centromere-associated inner kinetochore proteins. Required for establishing bipolar spindle-microtubule attachments and proper chromosome segregation. Its function is as follows. Component of the kinetochore, a multiprotein complex that assembles on centromeric DNA and attaches chromosomes to spindle microtubules, mediating chromosome segregation and sister chromatid segregation during meiosis and mitosis. Component of the inner kinetochore constitutive centromere-associated network (CCAN), which serves as a structural platform for outer kinetochore assembly. This chain is Inner kinetochore subunit CTF3 (CTF3), found in Saccharomyces cerevisiae (strain ATCC 204508 / S288c) (Baker's yeast).